A 59-amino-acid chain; its full sequence is Small integral membrane protein 30 (59 aa).

The N-terminal stretch at 1 to 24 is a signal peptide; it reads MTSVSTQLSLVLMSLLLVLPVVEA. Topologically, residues 25–29 are extracellular; sequence VEAGD. A helical membrane pass occupies residues 30-50; sequence AIALLLGVVLSITGICACLGV. Residues 51–59 are Cytoplasmic-facing; sequence YARKRNGQM.

Interacts (via transmembrane domain) with antiviral protein MAVS (via transmembrane domain); the interaction disrupts MAVS interaction with RIGI and inhibits MAVS aggregation, resulting in the repression of type I interferon signaling and innate immune responses.

The protein localises to the endoplasmic reticulum membrane. It is found in the mitochondrion membrane. Functionally, negatively regulates antiviral innate immune responses. Disrupts the interaction of antiviral protein MAVS with innate immune receptor RIGI and inhibits MAVS aggregation, resulting in the repression of type I interferon signaling and innate immune responses. The polypeptide is Small integral membrane protein 30 (Homo sapiens (Human)).